Reading from the N-terminus, the 306-residue chain is tRNA pseudouridine synthase B (306 aa).

D47 acts as the Nucleophile in catalysis.

Belongs to the pseudouridine synthase TruB family. Type 1 subfamily.

It catalyses the reaction uridine(55) in tRNA = pseudouridine(55) in tRNA. Responsible for synthesis of pseudouridine from uracil-55 in the psi GC loop of transfer RNAs. This chain is tRNA pseudouridine synthase B, found in Neisseria gonorrhoeae (strain ATCC 700825 / FA 1090).